The chain runs to 263 residues: Putative TATA-binding protein pB263R (263 aa).

This sequence belongs to the asfivirus B263R family.

Its function is as follows. Putative TATA-binding protein. The polypeptide is Putative TATA-binding protein pB263R (African swine fever virus (isolate Pig/Kenya/KEN-50/1950) (ASFV)).